The chain runs to 173 residues: Crossover junction endodeoxyribonuclease RuvC (173 aa).

Residues aspartate 8, glutamate 67, and aspartate 139 contribute to the active site. 3 residues coordinate Mg(2+): aspartate 8, glutamate 67, and aspartate 139.

This sequence belongs to the RuvC family. In terms of assembly, homodimer which binds Holliday junction (HJ) DNA. The HJ becomes 2-fold symmetrical on binding to RuvC with unstacked arms; it has a different conformation from HJ DNA in complex with RuvA. In the full resolvosome a probable DNA-RuvA(4)-RuvB(12)-RuvC(2) complex forms which resolves the HJ. The cofactor is Mg(2+).

It is found in the cytoplasm. It carries out the reaction Endonucleolytic cleavage at a junction such as a reciprocal single-stranded crossover between two homologous DNA duplexes (Holliday junction).. Functionally, the RuvA-RuvB-RuvC complex processes Holliday junction (HJ) DNA during genetic recombination and DNA repair. Endonuclease that resolves HJ intermediates. Cleaves cruciform DNA by making single-stranded nicks across the HJ at symmetrical positions within the homologous arms, yielding a 5'-phosphate and a 3'-hydroxyl group; requires a central core of homology in the junction. The consensus cleavage sequence is 5'-(A/T)TT(C/G)-3'. Cleavage occurs on the 3'-side of the TT dinucleotide at the point of strand exchange. HJ branch migration catalyzed by RuvA-RuvB allows RuvC to scan DNA until it finds its consensus sequence, where it cleaves and resolves the cruciform DNA. The protein is Crossover junction endodeoxyribonuclease RuvC of Klebsiella pneumoniae (strain 342).